The following is a 448-amino-acid chain: Putative sodium-coupled neutral amino acid transporter 11 (448 aa).

Residues Met-1–Ser-20 are disordered. Helical transmembrane passes span Val-22–Pro-42, Met-52–Val-72, Ile-94–Tyr-114, Phe-143–Ala-163, Leu-165–Val-185, Ala-200–Ile-220, Ile-246–Phe-266, Thr-286–Val-306, Ser-324–Tyr-344, Cys-346–Phe-366, and Met-389–Pro-409. N-linked (GlcNAc...) asparagine glycosylation is found at Asn-425, Asn-440, and Asn-444.

This sequence belongs to the amino acid/polyamine transporter 2 family.

The protein resides in the membrane. Its function is as follows. Putative sodium-dependent amino acid/proton antiporter. The polypeptide is Putative sodium-coupled neutral amino acid transporter 11 (slc38a11) (Danio rerio (Zebrafish)).